A 267-amino-acid polypeptide reads, in one-letter code: Tryptophan synthase alpha chain (267 aa).

Catalysis depends on proton acceptor residues glutamate 49 and aspartate 60.

The protein belongs to the TrpA family. In terms of assembly, tetramer of two alpha and two beta chains.

The enzyme catalyses (1S,2R)-1-C-(indol-3-yl)glycerol 3-phosphate + L-serine = D-glyceraldehyde 3-phosphate + L-tryptophan + H2O. It functions in the pathway amino-acid biosynthesis; L-tryptophan biosynthesis; L-tryptophan from chorismate: step 5/5. The alpha subunit is responsible for the aldol cleavage of indoleglycerol phosphate to indole and glyceraldehyde 3-phosphate. In Salinispora arenicola (strain CNS-205), this protein is Tryptophan synthase alpha chain.